Reading from the N-terminus, the 580-residue chain is Arrestin domain-containing protein A (580 aa).

N-linked (GlcNAc...) asparagine glycans are attached at residues Asn-27, Asn-33, and Asn-60. The disordered stretch occupies residues 31–54 (NVNTTSSHHHHHSNSGNAEVSFNG). 2 disordered regions span residues 67-86 (ETHS…EISI) and 95-114 (MTMS…HKES). A helical membrane pass occupies residues 118–138 (NLSLGGIVGAVVGAVTGGVMI). Residues Asn-149, Asn-341, and Asn-342 are each glycosylated (N-linked (GlcNAc...) asparagine). Residues 468-528 (DEHATACRKC…VCEECYPIAT (61 aa)) form an FYVE-type zinc finger. Residues Cys-474, Cys-477, Cys-490, Cys-493, Cys-498, Cys-501, Cys-520, and Cys-523 each contribute to the Zn(2+) site.

This sequence belongs to the arrestin family.

It localises to the membrane. This is Arrestin domain-containing protein A (adcA) from Dictyostelium discoideum (Social amoeba).